A 304-amino-acid chain; its full sequence is tRNA dimethylallyltransferase (304 aa).

ATP is bound at residue 9–16; the sequence is APTAAGKS. 11–16 is a binding site for substrate; sequence TAAGKS.

It belongs to the IPP transferase family. Monomer. Requires Mg(2+) as cofactor.

It carries out the reaction adenosine(37) in tRNA + dimethylallyl diphosphate = N(6)-dimethylallyladenosine(37) in tRNA + diphosphate. Functionally, catalyzes the transfer of a dimethylallyl group onto the adenine at position 37 in tRNAs that read codons beginning with uridine, leading to the formation of N6-(dimethylallyl)adenosine (i(6)A). This chain is tRNA dimethylallyltransferase, found in Deinococcus geothermalis (strain DSM 11300 / CIP 105573 / AG-3a).